A 63-amino-acid polypeptide reads, in one-letter code: Large ribosomal subunit protein uL29 (63 aa).

The protein belongs to the universal ribosomal protein uL29 family.

This chain is Large ribosomal subunit protein uL29, found in Shewanella pealeana (strain ATCC 700345 / ANG-SQ1).